The chain runs to 391 residues: Chalcone synthase 2 (391 aa).

C164 is a catalytic residue.

Belongs to the thiolase-like superfamily. Chalcone/stilbene synthases family.

It catalyses the reaction (E)-4-coumaroyl-CoA + 3 malonyl-CoA + 3 H(+) = 2',4,4',6'-tetrahydroxychalcone + 3 CO2 + 4 CoA. It participates in secondary metabolite biosynthesis; flavonoid biosynthesis. The primary product of this enzyme is 4,2',4',6'-tetrahydroxychalcone (also termed naringenin-chalcone or chalcone) which can under specific conditions spontaneously isomerize into naringenin. This Citrus sinensis (Sweet orange) protein is Chalcone synthase 2 (CHS2).